Consider the following 196-residue polypeptide: Glycerol-3-phosphate acyltransferase (196 aa).

Transmembrane regions (helical) follow at residues 5 to 25 (GLIAFAFGYLLGSIPFGMILT), 70 to 90 (VVIALLLSGPGAAMAATLGAF), 111 to 131 (IGVLLGLFWPAALAFCAIWLL), and 152 to 172 (LLLWGFGHPQFALLFAVLTVL).

The protein belongs to the PlsY family. In terms of assembly, probably interacts with PlsX.

The protein resides in the cell inner membrane. The catalysed reaction is an acyl phosphate + sn-glycerol 3-phosphate = a 1-acyl-sn-glycero-3-phosphate + phosphate. It participates in lipid metabolism; phospholipid metabolism. Catalyzes the transfer of an acyl group from acyl-phosphate (acyl-PO(4)) to glycerol-3-phosphate (G3P) to form lysophosphatidic acid (LPA). This enzyme utilizes acyl-phosphate as fatty acyl donor, but not acyl-CoA or acyl-ACP. The chain is Glycerol-3-phosphate acyltransferase from Nitrobacter winogradskyi (strain ATCC 25391 / DSM 10237 / CIP 104748 / NCIMB 11846 / Nb-255).